An 89-amino-acid polypeptide reads, in one-letter code: Small ribosomal subunit protein uS15 (89 aa).

This sequence belongs to the universal ribosomal protein uS15 family. In terms of assembly, part of the 30S ribosomal subunit. Forms a bridge to the 50S subunit in the 70S ribosome, contacting the 23S rRNA.

Functionally, one of the primary rRNA binding proteins, it binds directly to 16S rRNA where it helps nucleate assembly of the platform of the 30S subunit by binding and bridging several RNA helices of the 16S rRNA. Forms an intersubunit bridge (bridge B4) with the 23S rRNA of the 50S subunit in the ribosome. The sequence is that of Small ribosomal subunit protein uS15 from Pseudomonas aeruginosa (strain LESB58).